The chain runs to 314 residues: Ferredoxin:CoB-CoM heterodisulfide reductase subunit B (314 aa).

This sequence belongs to the HdrB family. As to quaternary structure, the ferredoxin:CoB-CoM heterodisulfide reductase is composed of three subunits; HdrA1, HdrB1 and HdrC1. [4Fe-4S] cluster serves as cofactor.

The protein localises to the cytoplasm. It carries out the reaction coenzyme B + coenzyme M + 2 oxidized [2Fe-2S]-[ferredoxin] = coenzyme M-coenzyme B heterodisulfide + 2 reduced [2Fe-2S]-[ferredoxin] + 2 H(+). It participates in cofactor metabolism; coenzyme M-coenzyme B heterodisulfide reduction; coenzyme B and coenzyme M from coenzyme M-coenzyme B heterodisulfide: step 1/1. Its function is as follows. Part of a complex that catalyzes the reversible reduction of CoM-S-S-CoB to the thiol-coenzymes H-S-CoM (coenzyme M) and H-S-CoB (coenzyme B). Probably involved in methylotrophic methanogenesis but not in aceticlastic methanogenesis. The protein is Ferredoxin:CoB-CoM heterodisulfide reductase subunit B of Methanosarcina acetivorans (strain ATCC 35395 / DSM 2834 / JCM 12185 / C2A).